A 425-amino-acid polypeptide reads, in one-letter code: G protein-activated inward rectifier potassium channel 2 (425 aa).

At 1 to 91 (MTMAKLTESM…IFTTLVDLKW (91 aa)) the chain is on the cytoplasmic side. Phosphoserine is present on residues S18 and S25. Residues 92 to 116 (RFNLLIFVMVYTVTWLFFGMIWWLI) form a helical membrane-spanning segment. Topologically, residues 117-140 (AYIRGDMDHIEDPSWTPCVTNLNG) are extracellular. The helical; Pore-forming intramembrane region spans 141–152 (FVSAFLFSIETE). Residues 153–159 (TTIGYGY) constitute an intramembrane region (pore-forming). Residues 154–159 (TIGYGY) carry the Selectivity filter motif. The Extracellular portion of the chain corresponds to 160 to 168 (RVITDKCPE). Residues 169–190 (GIILLLIQSVLGSIVNAFMVGC) form a helical membrane-spanning segment. Over 191–425 (MFVKISQPKK…VANLENESKV (235 aa)) the chain is Cytoplasmic. Positions 392-425 (NQHAELETEEEEKNPEELTERNGDVANLENESKV) are disordered. Residues 422–425 (ESKV) carry the PDZ-binding motif.

The protein belongs to the inward rectifier-type potassium channel (TC 1.A.2.1) family. KCNJ6 subfamily. In terms of assembly, associates with KCNJ3/GIRK1to form a G-protein-activated heteromultimer pore-forming unit. Associates with KCNJ5/GRIK4 to form a G-protein-activated heteromultimer pore-forming unit. The resulting inward current is much larger. Interacts (via PDZ-binding motif) with SNX27 (via PDZ domain); the interaction is required when endocytosed to prevent degradation in lysosomes and promote recycling to the plasma membrane. As to quaternary structure, associates with KCNJ3/GRIK1 to form a G-protein-activated heteromultimer pore-forming unit. Associates with KCNJ3/GRIK1 to form a G-protein-activated heteromultimer pore-forming unit. The resulting inward current is much larger. Expressed in the brain.

It localises to the membrane. The catalysed reaction is K(+)(in) = K(+)(out). With respect to regulation, activated by phosphatidylinositol 4,5 biphosphate (PtdIns(4,5)P2). In terms of biological role, inward rectifier potassium channels are characterized by a greater tendency to allow potassium to flow into the cell rather than out of it. Their voltage dependence is regulated by the concentration of extracellular potassium; as external potassium is raised, the voltage range of the channel opening shifts to more positive voltages. The inward rectification is mainly due to the blockage of outward current by internal magnesium. This potassium channel is controlled by G proteins. Forms a functional channel in association with KCNJ3/GIRK1. Functionally, inward rectifier potassium channels are characterized by a greater tendency to allow potassium to flow into the cell rather than out of it. Their voltage dependence is regulated by the concentration of extracellular potassium; as external potassium is raised, the voltage range of the channel opening shifts to more positive voltages. The inward rectification is mainly due to the blockage of outward current by internal magnesium. This potassium channel is controlled by G proteins. The polypeptide is G protein-activated inward rectifier potassium channel 2 (Kcnj6) (Mus musculus (Mouse)).